A 191-amino-acid chain; its full sequence is Fe/S biogenesis protein NfuA (191 aa).

Positions 149 and 152 each coordinate [4Fe-4S] cluster.

Belongs to the NfuA family. In terms of assembly, homodimer. [4Fe-4S] cluster is required as a cofactor.

In terms of biological role, involved in iron-sulfur cluster biogenesis. Binds a 4Fe-4S cluster, can transfer this cluster to apoproteins, and thereby intervenes in the maturation of Fe/S proteins. Could also act as a scaffold/chaperone for damaged Fe/S proteins. The sequence is that of Fe/S biogenesis protein NfuA from Pseudoalteromonas translucida (strain TAC 125).